We begin with the raw amino-acid sequence, 622 residues long: Apical membrane antigen 1 (622 aa).

The signal sequence occupies residues 1-24 (MRKLYCVLLLSAFEFTYMINFGRG). The Extracellular portion of the chain corresponds to 25–546 (QNYWEHPYQK…EHKPTYDKMK (522 aa)). Disulfide bonds link Cys-149–Cys-302, Cys-217–Cys-247, Cys-263–Cys-275, Cys-320–Cys-418, and Cys-337–Cys-409. The N-linked (GlcNAc...) asparagine glycan is linked to Asn-162. N-linked (GlcNAc...) asparagine glycans are attached at residues Asn-286, Asn-371, Asn-421, Asn-422, and Asn-499. 3 cysteine pairs are disulfide-bonded: Cys-443/Cys-502, Cys-490/Cys-507, and Cys-492/Cys-509. Residues 547 to 567 (IIIASSAAVAVLATILMVYLY) form a helical membrane-spanning segment. Topologically, residues 568 to 622 (KRKGNAEKYDKMDEPQDYGKSNSRNDEMLDPEASFWGEEKRASHTTPVLMEKPYY) are cytoplasmic. The segment at 577–607 (DKMDEPQDYGKSNSRNDEMLDPEASFWGEEK) is disordered.

It belongs to the apicomplexan parasites AMA1 family.

It localises to the membrane. Involved in parasite invasion of erythrocytes. The polypeptide is Apical membrane antigen 1 (AMA-1) (Plasmodium falciparum (isolate 7G8)).